The sequence spans 83 residues: Small ribosomal subunit protein uS17 (83 aa).

It belongs to the universal ribosomal protein uS17 family. In terms of assembly, part of the 30S ribosomal subunit.

In terms of biological role, one of the primary rRNA binding proteins, it binds specifically to the 5'-end of 16S ribosomal RNA. The protein is Small ribosomal subunit protein uS17 of Campylobacter hominis (strain ATCC BAA-381 / DSM 21671 / CCUG 45161 / LMG 19568 / NCTC 13146 / CH001A).